The following is a 273-amino-acid chain: MRQVAFYGKGGIGKSTTQQNTAAALASMGYRLMVVGCDPKADCTRLLLRGVRQPSVLDTLRDVGPESVQLEKVVVQGYGGVKCVESGGPEPGVGCGGRGVITAIQTLETLGAYKDDLDYVFYDVLGDVVCGGFAMPIREGYAEEIYIVCSGEYMALFAANNICKGIKKFAERGYARLGGLICNSRLVENERALVEEFARRLNTKMIHFVPRSKDVQRAEINKKTVIDYDPELPQAHEYRELARKIDENDEFTIPTPITQDELEDLMREYGIVD.

Residue 8–15 (GKGGIGKS) participates in ATP binding. Position 95 (Cys95) interacts with [4Fe-4S] cluster. Arg98 carries the post-translational modification ADP-ribosylarginine; by dinitrogenase reductase ADP-ribosyltransferase. Residue Cys130 participates in [4Fe-4S] cluster binding.

This sequence belongs to the NifH/BchL/ChlL family. As to quaternary structure, homodimer. [4Fe-4S] cluster serves as cofactor. In terms of processing, the reversible ADP-ribosylation of Arg-98 inactivates the nitrogenase reductase and regulates nitrogenase activity.

The enzyme catalyses N2 + 8 reduced [2Fe-2S]-[ferredoxin] + 16 ATP + 16 H2O = H2 + 8 oxidized [2Fe-2S]-[ferredoxin] + 2 NH4(+) + 16 ADP + 16 phosphate + 6 H(+). Its function is as follows. The key enzymatic reactions in nitrogen fixation are catalyzed by the nitrogenase complex, which has 2 components: the iron protein and the molybdenum-iron protein. This is Nitrogenase iron protein from Roseiflexus sp. (strain RS-1).